A 391-amino-acid polypeptide reads, in one-letter code: Tyrosinase-like protein phomQ2 (391 aa).

The segment at 1-21 (MDNVGCEASSSRDPKGKKAVG) is disordered. The helical transmembrane segment at 61-81 (IRGFICATIIFVVCLGALSYI) threads the bilayer. Asn-97 and Asn-141 each carry an N-linked (GlcNAc...) asparagine glycan. Cu cation contacts are provided by His-160 and His-169. 3 N-linked (GlcNAc...) asparagine glycosylation sites follow: Asn-204, Asn-246, and Asn-261. The Cu cation site is built by His-298 and His-324. N-linked (GlcNAc...) asparagine glycosylation occurs at Asn-353.

This sequence belongs to the tyrosinase family. Cu(2+) serves as cofactor.

Its subcellular location is the membrane. Its pathway is mycotoxin biosynthesis. Its function is as follows. Tyrosinase-like protein; part of the gene cluster that mediates the biosynthesis of the phomopsins, a group of hexapeptide mycotoxins which infects lupins and causes lupinosis disease in livestock. Within the pathway, phomQ2 is involved in the generation of the common 13-membered macrocycle, possibly by catalyzing the hydroxylation of Tyr. The pathway starts with the processing of the precursor phomA by several endopeptidases including kexin proteases as well as the cluster-specific S41 family peptidase phomP1 and the oligopeptidase phomG to produce 10 identical copies of the hexapeptide Tyr-Val-Ile-Pro-Ile-Asp. After being excised from the precursor peptide, the core peptides are cyclized and modified post-translationally by enzymes encoded within the gene cluster. The timing and order of proteolysis of the phomA precursor and PTMs are still unknown. Two tyrosinase-like enzymes, phomQ1 and phomQ2, catalyze the chlorination and hydroxylation of Tyr, respectively. PhomYb, is proposed to be involved in the construction of the macrocyclic structure. The other 4 ustYa family proteins may be involved in PTMs that generate the unique structure of phomopsin A. PhomYa is required for the hydroxylation of C-beta of Tyr. PhomYc, phomYd, and phomYe are responsible for the biosynthesis of 2,3-dehydroisoleucine (dIle), 2,3-dehydroaspartic acid (dAsp), and 3,4-dehydroproline (dPro), respectively. While dIle formation by phomYc is indispensable for the installation of dAsp by phomYd, the order of the other PTMs have not been elucidated yet. Most of the biosynthetic enzymes likely have broad substrate specificity, and thus, there might be a metabolic grid from a precursor to phomopsin A. The enzyme(s) responsible for the biosynthesis of 3,4-dehydrovaline (dVal) have also not been identified yet. Finally, phomM acts as an S-adenosylmethionine-dependent alpha-N-methyltransferase that catalyzes two successive N-methylation reactions, converting N-desmethyl-phomopsin A to phomopsin A and phomopsin A further to an N,N-dimethylated congener called phomopsin E. The polypeptide is Tyrosinase-like protein phomQ2 (Diaporthe leptostromiformis (Lupinosis disease fungus)).